A 618-amino-acid chain; its full sequence is Protease 4 (618 aa).

The Cytoplasmic segment spans residues 1–24; the sequence is MRTLWRFIAGFFKWTWRLLNFVRE. A helical transmembrane segment spans residues 25–45; that stretch reads MVLNLFFIFLVLVGVGIWMQV. Over 46 to 618 the chain is Periplasmic; the sequence is SGGDSKETAS…AFCLTCANMR (573 aa). The active-site Proton donor/acceptor is Lys-209. Ser-409 (nucleophile) is an active-site residue.

This sequence belongs to the peptidase S49 family. As to quaternary structure, homotetramer.

Its subcellular location is the cell inner membrane. Inhibited by serine hydrolase inhibitor FP-biotin and by antipain. Digests cleaved signal peptides in vitro, its in vivo function is unknown. This activity is necessary to maintain proper secretion of mature proteins across the membrane. In Escherichia coli (strain K12), this protein is Protease 4 (sppA).